The sequence spans 782 residues: Endonuclease MutS2 (782 aa).

An ATP-binding site is contributed by 336-343; it reads GPNTGGKT. The Smr domain maps to 707-782; sequence LDLRGYRYEE…GFGVTVAELK (76 aa).

The protein belongs to the DNA mismatch repair MutS family. MutS2 subfamily. In terms of assembly, homodimer. Binds to stalled ribosomes, contacting rRNA.

Its function is as follows. Endonuclease that is involved in the suppression of homologous recombination and thus may have a key role in the control of bacterial genetic diversity. Functionally, acts as a ribosome collision sensor, splitting the ribosome into its 2 subunits. Detects stalled/collided 70S ribosomes which it binds and splits by an ATP-hydrolysis driven conformational change. Acts upstream of the ribosome quality control system (RQC), a ribosome-associated complex that mediates the extraction of incompletely synthesized nascent chains from stalled ribosomes and their subsequent degradation. Probably generates substrates for RQC. The protein is Endonuclease MutS2 of Staphylococcus epidermidis (strain ATCC 12228 / FDA PCI 1200).